A 505-amino-acid chain; its full sequence is Flagellin (505 aa).

This sequence belongs to the bacterial flagellin family.

Its subcellular location is the secreted. The protein localises to the bacterial flagellum. In terms of biological role, flagellin is the subunit protein which polymerizes to form the filaments of bacterial flagella. The chain is Flagellin (fliC) from Salmonella rostock.